The chain runs to 717 residues: Pre-mRNA-splicing factor ATP-dependent RNA helicase DEAH10 (717 aa).

Positions 1–29 (MPSMAQGELKSFVQNSRPNPKSPTVSPFS) are disordered. Residues 12 to 29 (FVQNSRPNPKSPTVSPFS) are compositionally biased toward polar residues. One can recognise a Helicase ATP-binding domain in the interval 51–256 (VEEVQKNDIL…FGGAKAVHVQ (206 aa)). 64–71 (GETGSGKT) contacts ATP. Residues 162–165 (DEAH) carry the DEAH box motif. Positions 278–453 (TLVTIFQIHF…NIILQLKALG (176 aa)) constitute a Helicase C-terminal domain.

Belongs to the DEAD box helicase family. DEAH subfamily. PRP22 sub-subfamily. As to expression, widely expressed but spatially and temporally regulated during development.

The protein localises to the nucleus. It is found in the nucleolus. The catalysed reaction is ATP + H2O = ADP + phosphate + H(+). In terms of biological role, involved in pre-mRNA splicing. Plays a role during development in processes such as meristem maintenance, leaf morphogenesis and root morphogenesis. The chain is Pre-mRNA-splicing factor ATP-dependent RNA helicase DEAH10 from Arabidopsis thaliana (Mouse-ear cress).